Here is a 472-residue protein sequence, read N- to C-terminus: Lycopene beta cyclase, chloroplastic (472 aa).

A chloroplast-targeting transit peptide spans 1-25; it reads MDALLTSPFIPLKKPSHNRKSNTTT. Residues 1–27 form a disordered region; that stretch reads MDALLTSPFIPLKKPSHNRKSNTTTAS. 62 to 90 lines the NAD(+) pocket; it reads LAVVGGGPAGLAVAKRVSDAGLSVCSIDP.

This sequence belongs to the lycopene cyclase family. In terms of tissue distribution, expressed in flower buds and lips. Detected in roots and leaves.

Its subcellular location is the plastid. It localises to the chloroplast. The enzyme catalyses a carotenoid psi-end group = a carotenoid beta-end derivative. It participates in carotenoid biosynthesis; beta-carotene biosynthesis. It functions in the pathway carotenoid biosynthesis; beta-zeacarotene biosynthesis. Functionally, catalyzes the double cyclization reaction which converts lycopene to beta-carotene and neurosporene to beta-zeacarotene. This Oncidium hybrid cultivar (Orchid) protein is Lycopene beta cyclase, chloroplastic (LCY-B).